A 416-amino-acid polypeptide reads, in one-letter code: Phosphoglycerate kinase (416 aa).

(2R)-3-phosphoglycerate-binding residues include V23, D24, F25, N26, N38, R39, S62, H63, G65, R66, L121, R122, H169, and R170. G213 contacts ADP. Residue G213 participates in CDP binding. AMP is bound by residues A214 and K215. A214 and K215 together coordinate ATP. Residue A214 participates in Mg(2+) binding. Residue D218 coordinates CDP. D218 serves as a coordination point for Mg(2+). K219 provides a ligand contact to AMP. K219 contributes to the ATP binding site. G237 contributes to the ADP binding site. Residue G237 coordinates CDP. Residues G238 and G312 each coordinate AMP. G238 and G312 together coordinate ATP. CDP contacts are provided by G337 and F342. F342 provides a ligand contact to ADP. An AMP-binding site is contributed by E343. D374 contacts Mg(2+). An ATP-binding site is contributed by T375.

The protein belongs to the phosphoglycerate kinase family. Monomer. It depends on Mg(2+) as a cofactor.

The enzyme catalyses (2R)-3-phosphoglycerate + ATP = (2R)-3-phospho-glyceroyl phosphate + ADP. It participates in carbohydrate degradation; glycolysis; pyruvate from D-glyceraldehyde 3-phosphate: step 2/5. This Plasmodium falciparum (isolate 3D7) protein is Phosphoglycerate kinase (PGK).